We begin with the raw amino-acid sequence, 2592 residues long: 6-hydroxymellein synthase cdmE (2592 aa).

The segment covering 1 to 11 (MVLHPSDRRFP) has biased composition (basic and acidic residues). The interval 1–25 (MVLHPSDRRFPETNGVGGHSKDSSA) is disordered. The Ketosynthase family 3 (KS3) domain maps to 32 to 456 (LEPLAIVGFA…GTNAHVVLES (425 aa)). Catalysis depends on for beta-ketoacyl synthase activity residues cysteine 205, histidine 340, and histidine 379. The tract at residues 589–910 (VFTGQGAQWP…RYSHTITRKK (322 aa)) is malonyl-CoA:ACP transacylase (MAT) domain. Positions 978–1113 (HELLGSPDPD…GFIESKCESD (136 aa)) are N-terminal hotdog fold. The segment at 978-1291 (HELLGSPDPD…IRGTELCLLS (314 aa)) is dehydratase (DH) domain. Positions 978–1296 (HELLGSPDPD…LCLLSAGRGD (319 aa)) constitute a PKS/mFAS DH domain. Positions 1140–1296 (TQIGSISAFY…LCLLSAGRGD (157 aa)) are C-terminal hotdog fold. S-adenosyl-L-methionine-binding residues include isoleucine 1462 and glutamate 1484. Positions 1483 to 1591 (LEIGTGFGSV…HSLLKPGGKL (109 aa)) are methyltransferase (CMeT) domain. Positions 1887 to 2199 (GLLVWSDDEA…NDSNMDTAVI (313 aa)) are enoyl reductase (ER) domain. The segment at 2223-2398 (ATYVIAGGLG…IPGMSVNLGN (176 aa)) is ketoreductase (KR) domain. In terms of domain architecture, Carrier spans 2509–2586 (VAASHVTEAI…GLSEKIARQS (78 aa)). Serine 2546 bears the O-(pantetheine 4'-phosphoryl)serine mark.

It carries out the reaction 5 malonyl-CoA + AH2 + 5 H(+) = 6-hydroxymellein + A + 5 CO2 + 5 CoA + H2O. Its pathway is secondary metabolite biosynthesis; terpenoid biosynthesis. Its function is as follows. Highly reducing polyketide synthase; part of the gene cluster that mediates the biosynthesis of chrodrimanin B, a meroterpenoid that acts as a potent blocker of insect GABA-gated chloride channels. The first step of the pathway is the biosynthesis of 6-hydroxymellein by the polyketide synthase cdmE. The prenyltransferase cdmH acts as a 6-hydroxymellein 5-farnesyltransferase and produces the hydrophobic metabolite verruculide C. The FAD-dependent monooxygenase cdmI further converts verruculide C into verruculide B. The terpene cyclase cdmG then produced the pentacyclic molecule 3-hydroxypentacecilide A, the backbone structure of chrodrimanin B, via folding the farnesyl moiety of the substrate into the chair-boat conformation. The short-chain dehydrogenase/reductase cdmF functions as the 3-OH dehydrogenase that oxidizes the C-3 hydroxyl group of 3-hydroxypentacecilide A and produces chrodrimanin C, the dehydrogenated product of 3-hydroxypentacecilide A. The cytochrome P450 monooxygenase cdmJ then accepts both 3-hydroxypentacecilide A and chrodrimanin C and functions as a C-7-beta-hydroxylase to produce respectively chrodrimanin H and chrodrimanin F. The dioxygenase cdmA accepts chrodrimanin H to afford chrodrimanin E, which is further transformed to chrodrimanin A by the dioxygenase cdmD. CdmA can also accept chrodrimanin C as substrate to convert it into verruculide A, which is further converted into chrodrimanin T by cdmD. The last step of the biosynthesis is proposed to be performed by the acetyltransferase cdmC which acetylates chrodrimanin A to yield chrodrimanin B. The pathway may also lead to the production of additional shunt products, including chrodrimanins T and U. The polypeptide is 6-hydroxymellein synthase cdmE (Talaromyces verruculosus (Penicillium verruculosum)).